The primary structure comprises 408 residues: RNA-splicing ligase RtcB (408 aa).

Mn(2+)-binding residues include D75, C78, H168, H185, and H281. Residue 167–171 (NHFIE) participates in GMP binding. GMP is bound by residues 281–282 (HN), 313–316 (PGSM), S320, 337–340 (HGAG), and K407. Catalysis depends on H337, which acts as the GMP-histidine intermediate.

This sequence belongs to the RtcB family. As to quaternary structure, monomer. The cofactor is Mn(2+).

It carries out the reaction a 3'-end 3'-phospho-ribonucleotide-RNA + a 5'-end dephospho-ribonucleoside-RNA + GTP = a ribonucleotidyl-ribonucleotide-RNA + GMP + diphosphate. The enzyme catalyses a 3'-end 2',3'-cyclophospho-ribonucleotide-RNA + a 5'-end dephospho-ribonucleoside-RNA + GTP + H2O = a ribonucleotidyl-ribonucleotide-RNA + GMP + diphosphate + H(+). GTP-dependent RNA ligase that is involved in RNA repair. Joins RNA with 2',3'-cyclic-phosphate or 3'-phosphate ends to RNA with 5'-hydroxy ends. Also acts as a DNA ligase in case of DNA damage by splicing 'dirty' DNA breaks, characterized by 3'-phosphate (or cyclic-phosphate) and 5'-hydroxy ends that cannot be sealed by classical DNA ligases. Repairs tRNA cleaved by colicins D or E5, does not repair damaged 16S rRNA. Functionally, able to catalyze tRNA splicing in vivo in yeast, but bacteria are not known to splice tRNA. This Escherichia coli (strain K12) protein is RNA-splicing ligase RtcB.